The following is a 226-amino-acid chain: Transcriptional regulatory protein CitT (226 aa).

The region spanning 3–119 (HIAIAEDDFR…KFRQVLLQYK (117 aa)) is the Response regulatory domain. Aspartate 54 carries the post-translational modification 4-aspartylphosphate. A DNA-binding region (H-T-H motif) is located at residues 178-197 (AEELGEKMGASRTTARRYAE).

Post-translationally, phosphorylated by CitS.

The protein resides in the cytoplasm. Functionally, member of the two-component regulatory system CitT/CitS. Regulates the expression of the citM-yflN operon. Phosphorylated CitT binds to the citM promoter to activate the transcription of the citM-yflN operon. The polypeptide is Transcriptional regulatory protein CitT (citT) (Bacillus subtilis (strain 168)).